We begin with the raw amino-acid sequence, 347 residues long: Virulence plasmid protein pGP2-D (347 aa).

This is Virulence plasmid protein pGP2-D from Chlamydia psittaci (Chlamydophila psittaci).